A 224-amino-acid polypeptide reads, in one-letter code: CRP-like cAMP-activated global transcriptional regulator (224 aa).

3',5'-cyclic AMP is bound by residues G64 to T70, G79 to S82, R89 to T90, T134 to N135, I142 to F143, and E178 to R188. In terms of domain architecture, HTH crp-type spans T144–E217. The H-T-H motif DNA-binding region spans Q177 to A196.

In terms of assembly, homodimer.

In terms of biological role, global transcriptional regulator that complexes with cAMP and binds to specific DNA promoter sites, causing DNA-bending, to regulate transcription. cAMP improves binding to specific DNA sequences, probably by altering protein conformation. Activates expression of whiB1. The chain is CRP-like cAMP-activated global transcriptional regulator from Mycobacterium tuberculosis (strain CDC 1551 / Oshkosh).